Here is a 551-residue protein sequence, read N- to C-terminus: Putative transport protein CGSHiGG_02670 (551 aa).

The next 5 helical transmembrane spans lie at I4–W24, G28–N48, F65–S85, A95–A115, and V157–I177. 2 RCK C-terminal domains span residues R191–H275 and V277–N360. Transmembrane regions (helical) follow at residues M370–I390, A402–F424, I438–V458, L463–I483, Y492–A512, and V529–W549.

It belongs to the AAE transporter (TC 2.A.81) family. YidE subfamily.

Its subcellular location is the cell membrane. This is Putative transport protein CGSHiGG_02670 from Haemophilus influenzae (strain PittGG).